Here is a 498-residue protein sequence, read N- to C-terminus: Protein translocase subunit SecY (498 aa).

Transmembrane regions (helical) follow at residues 23 to 43 (FVISVFVTLFLILLFRVISVI), 65 to 87 (FDLFNLLGGGGLSQLSLFAVGIS), 124 to 144 (ITRFVTLPFAVVQAFAIIALI), 163 to 183 (AFYIVTMTAGTYIGIFIGDII), 191 to 211 (GITLLILSGILARLPDGFIVM), 229 to 249 (AINFSLYFLAFLVLLLAISFV), 281 to 301 (AAGVIPVIFASSIMSIPITIA), 322 to 342 (PVGISLYVILIIIFTFFYSYI), 382 to 402 (FIGAPFLAIVAVIPYIISLVL), and 406 to 426 (TTLSLGGTGIIIMVSASMELY). The span at 478–488 (VEPTQDKKKNP) shows a compositional bias: basic and acidic residues. The tract at residues 478–498 (VEPTQDKKKNPSDPLEVSQLW) is disordered.

This sequence belongs to the SecY/SEC61-alpha family. Component of the Sec protein translocase complex. Heterotrimer consisting of SecY, SecE and SecG subunits. The heterotrimers can form oligomers, although 1 heterotrimer is thought to be able to translocate proteins. Interacts with the ribosome. Interacts with SecDF, and other proteins may be involved. Interacts with SecA.

The protein resides in the cell membrane. Functionally, the central subunit of the protein translocation channel SecYEG. Consists of two halves formed by TMs 1-5 and 6-10. These two domains form a lateral gate at the front which open onto the bilayer between TMs 2 and 7, and are clamped together by SecE at the back. The channel is closed by both a pore ring composed of hydrophobic SecY resides and a short helix (helix 2A) on the extracellular side of the membrane which forms a plug. The plug probably moves laterally to allow the channel to open. The ring and the pore may move independently. The sequence is that of Protein translocase subunit SecY from Mycoplasmoides gallisepticum (strain R(low / passage 15 / clone 2)) (Mycoplasma gallisepticum).